The following is a 671-amino-acid chain: Preterminal protein (671 aa).

Residues 380-389 (RLPVRRRRRR) carry the Nuclear localization signal motif. The segment at 386–409 (RRRRVPPPPPPPEEEEEGEALMEE) is disordered. The span at 397–409 (PEEEEEGEALMEE) shows a compositional bias: acidic residues. Residue Ser580 is modified to O-(5'-phospho-DNA)-serine. Residues 645–671 (GADVPLPPLPAGPEPPLPPGARPRHRF) are disordered. Over residues 649-665 (PLPPLPAGPEPPLPPGA) the composition is skewed to pro residues.

It belongs to the adenoviridae terminal protein family. As to quaternary structure, heterodimer with the polymerase; this heterodimer binds to bp 9 to 18 of the genome. Interacts with host POU2F1; POU2F1 binds to the auxiliary sequences in the inverted terminal repeats and tethers the pTP-POL heterodimer to the origin DNA thereby participating in the assembly of the pre-initiation complex (POL-TP-DBP-NFIA-POU2F1). In terms of processing, preterminal protein is used to replicate viral genome, upon genomic encapsidation it is processed first into iTP and finally into TP by adenovirus protease.

It is found in the host nucleus matrix. Protein covalently bound to the viral DNA that acts as a primer for viral genomic replication by DNA strand displacement. Assembles on the viral origin of replication in an initiation complex with viral polymerase, DBP, host NFIA and host POU2F1/OCT1. During initiation, the polymerase covalently couples the first dCTP with Ser-580 of pTP. The terminal protein stimulates the template activity over 20 fold compared to protein-free templates. Neo-synthesized viral genomes are linked to two preterminal proteins, one for each 5' end. These new genomes are encapsidated in the nucleus, and during capsid maturation by viral protease, preterminal protein is first cleaved into intermediary (iTP), then into mature TP. May play a role in host nuclear matrix localization of genomic DNA. The sequence is that of Preterminal protein from Homo sapiens (Human).